The following is a 332-amino-acid chain: HTH-type transcriptional regulator RegA (332 aa).

Residues 1-57 enclose the HTH lacI-type domain; sequence MATSIKDVAREAGVSIATVSRVLNDIDVVNEDTKKKVLDAIKELGYRPNIVARSLKT. A DNA-binding region (H-T-H motif) is located at residues 5-24; sequence IKDVAREAGVSIATVSRVLN.

Involved in the regulation of amylase production. The polypeptide is HTH-type transcriptional regulator RegA (regA) (Clostridium saccharobutylicum).